Consider the following 293-residue polypeptide: MPELPEVETVRRGLQPFMEGATVVRVEQNRPDLRFAFPENFAERLSGRRIEALGRRAKYLTVHLDDGLSIISHLGMSGSFRIEAEDAQGLPGGFHHERSKNSLHDHVVFHLMRPDGASARIIYNDPRRFGFMLFAEKGALEEHPLLKDLGVEPTGNLLSGEVLAALFKGRRTPLKAALLDQRLIAGLGNIYVCEALWRPGLSPMRAAGSVAGEMDVMERLAGAIRSVIAQAIAAGGSSLKDYIQADGALGYFQHSFSVYGREGKPCRNPACGGTVERVVQSGRSTFFCASCQT.

P2 (schiff-base intermediate with DNA) is an active-site residue. The active-site Proton donor is E3. K58 functions as the Proton donor; for beta-elimination activity in the catalytic mechanism. DNA contacts are provided by H104, R127, and R170. The FPG-type zinc-finger motif lies at 257-293 (SVYGREGKPCRNPACGGTVERVVQSGRSTFFCASCQT). The active-site Proton donor; for delta-elimination activity is the R283.

It belongs to the FPG family. In terms of assembly, monomer. Zn(2+) serves as cofactor.

It catalyses the reaction Hydrolysis of DNA containing ring-opened 7-methylguanine residues, releasing 2,6-diamino-4-hydroxy-5-(N-methyl)formamidopyrimidine.. It carries out the reaction 2'-deoxyribonucleotide-(2'-deoxyribose 5'-phosphate)-2'-deoxyribonucleotide-DNA = a 3'-end 2'-deoxyribonucleotide-(2,3-dehydro-2,3-deoxyribose 5'-phosphate)-DNA + a 5'-end 5'-phospho-2'-deoxyribonucleoside-DNA + H(+). Functionally, involved in base excision repair of DNA damaged by oxidation or by mutagenic agents. Acts as a DNA glycosylase that recognizes and removes damaged bases. Has a preference for oxidized purines, such as 7,8-dihydro-8-oxoguanine (8-oxoG). Has AP (apurinic/apyrimidinic) lyase activity and introduces nicks in the DNA strand. Cleaves the DNA backbone by beta-delta elimination to generate a single-strand break at the site of the removed base with both 3'- and 5'-phosphates. In Brucella melitensis biotype 1 (strain ATCC 23456 / CCUG 17765 / NCTC 10094 / 16M), this protein is Formamidopyrimidine-DNA glycosylase.